Consider the following 148-residue polypeptide: Large ribosomal subunit protein bL9 (148 aa).

The protein belongs to the bacterial ribosomal protein bL9 family.

Its function is as follows. Binds to the 23S rRNA. The polypeptide is Large ribosomal subunit protein bL9 (Leptospira biflexa serovar Patoc (strain Patoc 1 / Ames)).